The primary structure comprises 367 residues: DNA replication and repair protein RecF (367 aa).

An ATP-binding site is contributed by 30 to 37 (GNNGEGKT).

It belongs to the RecF family.

Its subcellular location is the cytoplasm. Its function is as follows. The RecF protein is involved in DNA metabolism; it is required for DNA replication and normal SOS inducibility. RecF binds preferentially to single-stranded, linear DNA. It also seems to bind ATP. In Leptospira biflexa serovar Patoc (strain Patoc 1 / Ames), this protein is DNA replication and repair protein RecF.